The following is a 259-amino-acid chain: Phosphatidylglycerol--prolipoprotein diacylglyceryl transferase (259 aa).

4 consecutive transmembrane segments (helical) span residues 12–32, 41–61, 80–100, and 109–129; these read LAIH…VYLA, ISSD…IVGA, IIAI…GALV, and VLNP…AQAI. R131 contributes to the a 1,2-diacyl-sn-glycero-3-phospho-(1'-sn-glycerol) binding site. The next 3 helical transmembrane spans lie at 167–187, 194–214, and 226–246; these read IPTF…IMMW, LLDG…RLVI, and GIRI…IFVI.

This sequence belongs to the Lgt family.

It localises to the cell membrane. The catalysed reaction is L-cysteinyl-[prolipoprotein] + a 1,2-diacyl-sn-glycero-3-phospho-(1'-sn-glycerol) = an S-1,2-diacyl-sn-glyceryl-L-cysteinyl-[prolipoprotein] + sn-glycerol 1-phosphate + H(+). It participates in protein modification; lipoprotein biosynthesis (diacylglyceryl transfer). Functionally, catalyzes the transfer of the diacylglyceryl group from phosphatidylglycerol to the sulfhydryl group of the N-terminal cysteine of a prolipoprotein, the first step in the formation of mature lipoproteins. This Streptococcus pyogenes serotype M3 (strain ATCC BAA-595 / MGAS315) protein is Phosphatidylglycerol--prolipoprotein diacylglyceryl transferase.